Here is a 210-residue protein sequence, read N- to C-terminus: Putative cutinase (210 aa).

Residues D26–G38 show a composition bias toward basic and acidic residues. The interval D26 to A58 is disordered. Over residues S49–A58 the composition is skewed to low complexity.

The enzyme catalyses cutin + H2O = cutin monomers.. This chain is Putative cutinase, found in Phytophthora capsici.